The following is a 456-amino-acid chain: 3-isopropylmalate dehydratase large subunit (456 aa).

Residues Cys-336, Cys-396, and Cys-399 each contribute to the [4Fe-4S] cluster site.

It belongs to the aconitase/IPM isomerase family. LeuC type 1 subfamily. In terms of assembly, heterodimer of LeuC and LeuD. The cofactor is [4Fe-4S] cluster.

It catalyses the reaction (2R,3S)-3-isopropylmalate = (2S)-2-isopropylmalate. The protein operates within amino-acid biosynthesis; L-leucine biosynthesis; L-leucine from 3-methyl-2-oxobutanoate: step 2/4. In terms of biological role, catalyzes the isomerization between 2-isopropylmalate and 3-isopropylmalate, via the formation of 2-isopropylmaleate. The sequence is that of 3-isopropylmalate dehydratase large subunit from Staphylococcus haemolyticus (strain JCSC1435).